The chain runs to 166 residues: Transmembrane protein 278 (166 aa).

Residues 1-15 show a composition bias toward acidic residues; sequence MSDQERETEEDEGGD. The interval 1–28 is disordered; sequence MSDQERETEEDEGGDPSDTAPMLPQRLP. 3 helical membrane-spanning segments follow: residues 39-59, 65-85, and 111-131; these read GWASLAARGLGTLLFQGWALA, LLLPAAVFLLVLLPAAAVVYL, and AAVIVLGFLSLPPLLVLASAA.

This sequence belongs to the TMEM88 family.

It localises to the membrane. This chain is Transmembrane protein 278 (TMEM278), found in Bos taurus (Bovine).